The following is a 141-amino-acid chain: Galactose-6-phosphate isomerase subunit LacA 1 (141 aa).

Belongs to the LacAB/RpiB family. In terms of assembly, heteromultimeric protein consisting of LacA and LacB.

The catalysed reaction is aldehydo-D-galactose 6-phosphate = keto-D-tagatose 6-phosphate. The protein operates within carbohydrate metabolism; D-galactose 6-phosphate degradation; D-tagatose 6-phosphate from D-galactose 6-phosphate: step 1/1. The chain is Galactose-6-phosphate isomerase subunit LacA 1 from Streptococcus agalactiae serotype III (strain NEM316).